A 713-amino-acid chain; its full sequence is Phosphoribosylformylglycinamidine synthase subunit PurL (713 aa).

The active site involves His32. Tyr35 provides a ligand contact to ATP. Glu76 contacts Mg(2+). Substrate contacts are provided by residues 77 to 80 (SHNH) and Arg99. His78 (proton acceptor) is an active-site residue. Asp100 serves as a coordination point for Mg(2+). Gln224 contacts substrate. Position 252 (Asp252) interacts with Mg(2+). 296 to 298 (ESQ) serves as a coordination point for substrate. Positions 471 and 508 each coordinate ATP. Asn509 is a Mg(2+) binding site. Ser511 is a binding site for substrate.

Belongs to the FGAMS family. In terms of assembly, monomer. Part of the FGAM synthase complex composed of 1 PurL, 1 PurQ and 2 PurS subunits.

It is found in the cytoplasm. It carries out the reaction N(2)-formyl-N(1)-(5-phospho-beta-D-ribosyl)glycinamide + L-glutamine + ATP + H2O = 2-formamido-N(1)-(5-O-phospho-beta-D-ribosyl)acetamidine + L-glutamate + ADP + phosphate + H(+). It functions in the pathway purine metabolism; IMP biosynthesis via de novo pathway; 5-amino-1-(5-phospho-D-ribosyl)imidazole from N(2)-formyl-N(1)-(5-phospho-D-ribosyl)glycinamide: step 1/2. Part of the phosphoribosylformylglycinamidine synthase complex involved in the purines biosynthetic pathway. Catalyzes the ATP-dependent conversion of formylglycinamide ribonucleotide (FGAR) and glutamine to yield formylglycinamidine ribonucleotide (FGAM) and glutamate. The FGAM synthase complex is composed of three subunits. PurQ produces an ammonia molecule by converting glutamine to glutamate. PurL transfers the ammonia molecule to FGAR to form FGAM in an ATP-dependent manner. PurS interacts with PurQ and PurL and is thought to assist in the transfer of the ammonia molecule from PurQ to PurL. The protein is Phosphoribosylformylglycinamidine synthase subunit PurL of Thermococcus sibiricus (strain DSM 12597 / MM 739).